Here is a 225-residue protein sequence, read N- to C-terminus: Glucose-induced degradation protein 8 homolog (225 aa).

The 33-residue stretch at 22–54 (QRAEMNRLIMDYLVTEGYKEAAEKFRIESGTQP) folds into the LisH domain. A CTLH domain is found at 60–117 (SLDDRIKIREAVQKGDLEQAVSMTNKLNPDILDSNQQLYFHLQQQRLIELIREKDIEA).

This sequence belongs to the GID8 family.

The protein resides in the cytoplasm. Its subcellular location is the nucleus. Core component of the CTLH E3 ubiquitin-protein ligase complex that mediates ubiquitination and subsequent proteasomal degradation of target proteins. Acts as a positive regulator of Wnt signaling pathway by promoting beta-catenin (CTNNB1) nuclear accumulation. In Nematostella vectensis (Starlet sea anemone), this protein is Glucose-induced degradation protein 8 homolog.